A 303-amino-acid chain; its full sequence is Monoglyceride lipase (303 aa).

Thr-10 carries the post-translational modification Phosphothreonine. Tyr-58 carries the post-translational modification 3'-nitrotyrosine. Residue Ser-122 is the Nucleophile of the active site. Active-site charge relay system residues include Asp-239 and His-269.

The protein belongs to the AB hydrolase superfamily. Monoacylglycerol lipase family. Homodimer. As to expression, detected in adipose tissue, lung, liver, kidney, brain and heart.

It is found in the cytoplasm. It localises to the cytosol. Its subcellular location is the membrane. It carries out the reaction Hydrolyzes glycerol monoesters of long-chain fatty acids.. The enzyme catalyses a 1-acylglycerol + H2O = glycerol + a fatty acid + H(+). It catalyses the reaction a 2-acylglycerol + H2O = glycerol + a fatty acid + H(+). The catalysed reaction is 1-octanoylglycerol + H2O = octanoate + glycerol + H(+). It carries out the reaction 2-(5Z,8Z,11Z,14Z-eicosatetraenoyl)-glycerol + H2O = glycerol + (5Z,8Z,11Z,14Z)-eicosatetraenoate + H(+). The enzyme catalyses 1-decanoylglycerol + H2O = decanoate + glycerol + H(+). It catalyses the reaction 1-dodecanoylglycerol + H2O = dodecanoate + glycerol + H(+). The catalysed reaction is 1-tetradecanoylglycerol + H2O = tetradecanoate + glycerol + H(+). It carries out the reaction 2-hexadecanoylglycerol + H2O = glycerol + hexadecanoate + H(+). The enzyme catalyses 1-(9Z-octadecenoyl)-glycerol + H2O = glycerol + (9Z)-octadecenoate + H(+). It catalyses the reaction 2-(9Z-octadecenoyl)-glycerol + H2O = glycerol + (9Z)-octadecenoate + H(+). The catalysed reaction is 2-(9Z,12Z-octadecadienoyl)-glycerol + H2O = (9Z,12Z)-octadecadienoate + glycerol + H(+). It carries out the reaction 1-(5Z,8Z,11Z,14Z-eicosatetraenoyl)-glycerol + H2O = glycerol + (5Z,8Z,11Z,14Z)-eicosatetraenoate + H(+). The enzyme catalyses 1-(9Z,12Z-octadecadienoyl)-glycerol + H2O = (9Z,12Z)-octadecadienoate + glycerol + H(+). It catalyses the reaction 1-hexadecanoylglycerol + H2O = glycerol + hexadecanoate + H(+). The catalysed reaction is 1-octadecanoylglycerol + H2O = octadecanoate + glycerol + H(+). It carries out the reaction prostaglandin E2 1-glyceryl ester + H2O = prostaglandin E2 + glycerol + H(+). The enzyme catalyses prostaglandin D2-1-glycerol ester + H2O = prostaglandin D2 + glycerol + H(+). It catalyses the reaction 2-glyceryl-15-deoxy-Delta(12,14)-prostaglandin J2 + H2O = 15-deoxy-Delta(12,14)-prostaglandin J2 + glycerol + H(+). The catalysed reaction is prostaglandin F2alpha 1-glyceryl ester + H2O = prostaglandin F2alpha + glycerol + H(+). Its pathway is glycerolipid metabolism; triacylglycerol degradation. Functionally, converts monoacylglycerides to free fatty acids and glycerol. Hydrolyzes the endocannabinoid 2-arachidonoylglycerol, and thereby contributes to the regulation of endocannabinoid signaling, nociperception and perception of pain. Regulates the levels of fatty acids that serve as signaling molecules and promote cancer cell migration, invasion and tumor growth. This Homo sapiens (Human) protein is Monoglyceride lipase.